A 667-amino-acid chain; its full sequence is MADLSSRVNELHDLLNQYSYEYYVEDNPSVPDSEYDKLLHELIKIEEEHPEFKTVDSPTVRVGGEAQASFNKVNHDTPMLSLGNAFNEDDLRKFDQRIREQIGNVEYMCELKIDGLAVSLKYVDGYFVQGLTRGDGTTGEDITENLKTIHAIPLKMKEPLNVEVRGEAYMPRRSFLRLNEEKEKNDEQLFANPRNAAAGSLRQLDSKLTAKRKLSVFIYSVNDFTDFNARSQSEALDELDKLGFTTNKNRARVSDIDGVLEYIEKWTSQRESLPYDIDGIVIKVNDLDQQDEMGFTQKSPRWAIAYKFPAEEVVTKLLDIELSIGRTGVVTPTAILEPVKVAGTTVSRASLHNEDLIHDRDIRIGDSVVVKKAGDIIPEVVRSIPERRPEDAVTYHMPTHCPSCGHELVRIEGEVALRCINPKCQAQLVEGLIHFVSRQAMNIDGLGTKIIQQLYQSELIKDVADIFYLTEEDLLPLDRMGQKKVDNLLAAIQQAKDNSLENLLFGLGIRHLGVKASQVLAEKYETIDRLLTVTEAELVEIHDIGDKVAQSVVTYLENEDIRALIQKLKDKHVNMIYKGIKTSDIEGHPEFSGKTIVLTGKLHQMTRNEASKWLASQGAKVTSSVTKNTDVVIAGEDAGSKLTKAQSLGIEIWTEQQFVDKQNELNS.

NAD(+) contacts are provided by residues 32 to 36, 81 to 82, and E110; these read DSEYD and SL. K112 functions as the N6-AMP-lysine intermediate in the catalytic mechanism. Residues R133, E167, K283, and K307 each coordinate NAD(+). Positions 401, 404, 419, and 424 each coordinate Zn(2+). Positions 586–667 constitute a BRCT domain; that stretch reads EGHPEFSGKT…FVDKQNELNS (82 aa).

It belongs to the NAD-dependent DNA ligase family. LigA subfamily. Requires Mg(2+) as cofactor. It depends on Mn(2+) as a cofactor.

The enzyme catalyses NAD(+) + (deoxyribonucleotide)n-3'-hydroxyl + 5'-phospho-(deoxyribonucleotide)m = (deoxyribonucleotide)n+m + AMP + beta-nicotinamide D-nucleotide.. DNA ligase that catalyzes the formation of phosphodiester linkages between 5'-phosphoryl and 3'-hydroxyl groups in double-stranded DNA using NAD as a coenzyme and as the energy source for the reaction. It is essential for DNA replication and repair of damaged DNA. The protein is DNA ligase of Staphylococcus aureus (strain MRSA252).